The primary structure comprises 241 residues: MSADAGPGSGALVLFSGGQDSTTTLAWALDRFERVETLGFDYGQRHRIELDCRVKVRAAMAALNPAWAAKLGEDHTLALDALGAVSDTALTRDVAIEMTEGGLPNTFVPGRNIVFLTFAAALAYRRGLKHIVGGMCETDFSGYPDCRDDTIKALQVALNLGMDRRFVLETPLMWIDKAETWRLAERLGGRALVDLIVEDTHTCYLGERGPRHPWGHGCGTCPACQLRAEGFARYEAARVSE.

15 to 25 (FSGGQDSTTTL) provides a ligand contact to ATP. The Zn(2+) site is built by cysteine 203, cysteine 218, cysteine 221, and cysteine 224.

This sequence belongs to the QueC family. It depends on Zn(2+) as a cofactor.

It catalyses the reaction 7-carboxy-7-deazaguanine + NH4(+) + ATP = 7-cyano-7-deazaguanine + ADP + phosphate + H2O + H(+). Its pathway is purine metabolism; 7-cyano-7-deazaguanine biosynthesis. Functionally, catalyzes the ATP-dependent conversion of 7-carboxy-7-deazaguanine (CDG) to 7-cyano-7-deazaguanine (preQ(0)). This Azorhizobium caulinodans (strain ATCC 43989 / DSM 5975 / JCM 20966 / LMG 6465 / NBRC 14845 / NCIMB 13405 / ORS 571) protein is 7-cyano-7-deazaguanine synthase.